The sequence spans 876 residues: Leucine--tRNA ligase (876 aa).

Positions 43 to 53 (PYPSGRIHMGH) match the 'HIGH' region motif. Positions 632–636 (KMSKS) match the 'KMSKS' region motif. ATP is bound at residue K635.

Belongs to the class-I aminoacyl-tRNA synthetase family.

The protein localises to the cytoplasm. The enzyme catalyses tRNA(Leu) + L-leucine + ATP = L-leucyl-tRNA(Leu) + AMP + diphosphate. The sequence is that of Leucine--tRNA ligase from Sinorhizobium medicae (strain WSM419) (Ensifer medicae).